Consider the following 843-residue polypeptide: Protein P (843 aa).

Residues 1–177 form a terminal protein domain (TP) region; sequence MPLSYQHFRK…FCGSPYSWEQ (177 aa). Positions 178–346 are spacer; that stretch reads DLQHGRLVFQ…YCLSHIVNLI (169 aa). The segment at 219 to 269 is disordered; the sequence is RKSRLGPQPAQGQLAGRQQGGSGSIRARVHPSPWGTVGVEPSGSGPTHNCA. The segment covering 223–235 has biased composition (low complexity); that stretch reads LGPQPAQGQLAGR. The interval 347-690 is polymerase/reverse transcriptase domain (RT); it reads EDWGPCTEHG…YLNLYPVARQ (344 aa). The Reverse transcriptase domain occupies 357–600; it reads EHRIRTPRTP…YSLNFMGYVI (244 aa). Positions 429, 551, and 552 each coordinate Mg(2+).

It belongs to the hepadnaviridae P protein family.

The catalysed reaction is DNA(n) + a 2'-deoxyribonucleoside 5'-triphosphate = DNA(n+1) + diphosphate. It carries out the reaction Endonucleolytic cleavage to 5'-phosphomonoester.. Activated by host HSP70 and HSP40 in vitro to be able to bind the epsilon loop of the pgRNA. Because deletion of the RNase H region renders the protein partly chaperone-independent, the chaperones may be needed indirectly to relieve occlusion of the RNA-binding site by this domain. Inhibited by several reverse-transcriptase inhibitors: Lamivudine, Adefovir and Entecavir. Functionally, multifunctional enzyme that converts the viral RNA genome into dsDNA in viral cytoplasmic capsids. This enzyme displays a DNA polymerase activity that can copy either DNA or RNA templates, and a ribonuclease H (RNase H) activity that cleaves the RNA strand of RNA-DNA heteroduplexes in a partially processive 3'- to 5'-endonucleasic mode. Neo-synthesized pregenomic RNA (pgRNA) are encapsidated together with the P protein, and reverse-transcribed inside the nucleocapsid. Initiation of reverse-transcription occurs first by binding the epsilon loop on the pgRNA genome, and is initiated by protein priming, thereby the 5'-end of (-)DNA is covalently linked to P protein. Partial (+)DNA is synthesized from the (-)DNA template and generates the relaxed circular DNA (RC-DNA) genome. After budding and infection, the RC-DNA migrates in the nucleus, and is converted into a plasmid-like covalently closed circular DNA (cccDNA). The activity of P protein does not seem to be necessary for cccDNA generation, and is presumably released from (+)DNA by host nuclear DNA repair machinery. The protein is Protein P of Hepatitis B virus genotype B2 subtype adw (isolate China/patient4/1996) (HBV-B).